A 152-amino-acid polypeptide reads, in one-letter code: 6,7-dimethyl-8-ribityllumazine synthase (152 aa).

5-amino-6-(D-ribitylamino)uracil contacts are provided by residues phenylalanine 18, 49-51 (ALE), and 75-77 (CVI). 80–81 (ET) serves as a coordination point for (2S)-2-hydroxy-3-oxobutyl phosphate. The Proton donor role is filled by histidine 83. Asparagine 108 lines the 5-amino-6-(D-ribitylamino)uracil pocket. Arginine 122 provides a ligand contact to (2S)-2-hydroxy-3-oxobutyl phosphate.

It belongs to the DMRL synthase family.

It catalyses the reaction (2S)-2-hydroxy-3-oxobutyl phosphate + 5-amino-6-(D-ribitylamino)uracil = 6,7-dimethyl-8-(1-D-ribityl)lumazine + phosphate + 2 H2O + H(+). It functions in the pathway cofactor biosynthesis; riboflavin biosynthesis; riboflavin from 2-hydroxy-3-oxobutyl phosphate and 5-amino-6-(D-ribitylamino)uracil: step 1/2. In terms of biological role, catalyzes the formation of 6,7-dimethyl-8-ribityllumazine by condensation of 5-amino-6-(D-ribitylamino)uracil with 3,4-dihydroxy-2-butanone 4-phosphate. This is the penultimate step in the biosynthesis of riboflavin. The protein is 6,7-dimethyl-8-ribityllumazine synthase of Bartonella bacilliformis (strain ATCC 35685 / KC583 / Herrer 020/F12,63).